Consider the following 487-residue polypeptide: Protein nucleotidyltransferase YdiU (487 aa).

Glycine 90, glycine 92, arginine 93, lysine 113, aspartate 125, glycine 126, arginine 176, and arginine 183 together coordinate ATP. Catalysis depends on aspartate 252, which acts as the Proton acceptor. Mg(2+) is bound by residues asparagine 253 and aspartate 262. Position 262 (aspartate 262) interacts with ATP.

This sequence belongs to the SELO family. It depends on Mg(2+) as a cofactor. Mn(2+) is required as a cofactor.

It carries out the reaction L-seryl-[protein] + ATP = 3-O-(5'-adenylyl)-L-seryl-[protein] + diphosphate. The catalysed reaction is L-threonyl-[protein] + ATP = 3-O-(5'-adenylyl)-L-threonyl-[protein] + diphosphate. The enzyme catalyses L-tyrosyl-[protein] + ATP = O-(5'-adenylyl)-L-tyrosyl-[protein] + diphosphate. It catalyses the reaction L-histidyl-[protein] + UTP = N(tele)-(5'-uridylyl)-L-histidyl-[protein] + diphosphate. It carries out the reaction L-seryl-[protein] + UTP = O-(5'-uridylyl)-L-seryl-[protein] + diphosphate. The catalysed reaction is L-tyrosyl-[protein] + UTP = O-(5'-uridylyl)-L-tyrosyl-[protein] + diphosphate. Nucleotidyltransferase involved in the post-translational modification of proteins. It can catalyze the addition of adenosine monophosphate (AMP) or uridine monophosphate (UMP) to a protein, resulting in modifications known as AMPylation and UMPylation. This chain is Protein nucleotidyltransferase YdiU, found in Pseudomonas syringae pv. syringae (strain B728a).